A 246-amino-acid polypeptide reads, in one-letter code: Uridylate kinase (246 aa).

An ATP-binding site is contributed by 20–23 (KISG). The interval 28–33 (GDQGYG) is involved in allosteric activation by GTP. Gly62 is a binding site for UMP. Positions 63 and 67 each coordinate ATP. Residues Asp82 and 143–150 (TGNPYFTT) each bind UMP. The ATP site is built by Thr170, Tyr176, and Asp179.

Belongs to the UMP kinase family. As to quaternary structure, homohexamer.

It is found in the cytoplasm. It carries out the reaction UMP + ATP = UDP + ADP. It functions in the pathway pyrimidine metabolism; CTP biosynthesis via de novo pathway; UDP from UMP (UMPK route): step 1/1. With respect to regulation, allosterically activated by GTP. Inhibited by UTP. Catalyzes the reversible phosphorylation of UMP to UDP. This chain is Uridylate kinase, found in Cereibacter sphaeroides (strain ATCC 17023 / DSM 158 / JCM 6121 / CCUG 31486 / LMG 2827 / NBRC 12203 / NCIMB 8253 / ATH 2.4.1.) (Rhodobacter sphaeroides).